The sequence spans 287 residues: L-cysteine S-thiosulfotransferase subunit SoxA (287 aa).

Residues 1–26 form the signal peptide; that stretch reads MKTMTGRLVAAALVCGGAFSGAAVSA. The region spanning 74–168 is the Cytochrome c domain; the sequence is DDFENSGMVF…AMVALIASVS (95 aa). Residues Cys-102, Cys-105, His-106, Cys-140, Cys-203, Cys-206, and His-207 each coordinate heme c. Residue Arg-244 coordinates substrate. Heme c is bound at residue Cys-248. Cys-248 serves as the catalytic Cysteine persulfide intermediate.

The protein belongs to the SoxA family. As to quaternary structure, heterodimer of SoxA and SoxX. Requires heme c as cofactor. Post-translationally, cysteine persulfide at Cys-248.

It is found in the periplasm. The enzyme catalyses L-cysteinyl-[SoxY protein] + thiosulfate + 2 Fe(III)-[cytochrome c] = S-sulfosulfanyl-L-cysteinyl-[SoxY protein] + 2 Fe(II)-[cytochrome c] + 2 H(+). The catalysed reaction is S-sulfanyl-L-cysteinyl-[SoxY protein] + thiosulfate + 2 Fe(III)-[cytochrome c] = S-(2-sulfodisulfanyl)-L-cysteinyl-[SoxY protein] + 2 Fe(II)-[cytochrome c] + 2 H(+). In terms of biological role, C-type diheme cytochrome, which is part of the SoxAX cytochrome complex involved in sulfur oxidation. The SoxAX complex catalyzes the formation of a heterodisulfide bond between the conserved cysteine residue on a sulfur carrier SoxYZ complex subunit SoxY and thiosulfate or other inorganic sulfur substrates. This leads to the liberation of two electrons, which may be transferred from the SoxAX complex to another cytochrome c and which then may be used for reductive CO(2) fixation. The sequence is that of L-cysteine S-thiosulfotransferase subunit SoxA from Rhodovulum sulfidophilum (Rhodobacter sulfidophilus).